Reading from the N-terminus, the 353-residue chain is Photosystem II D2 protein (353 aa).

Position 2 is an N-acetylthreonine (T2). A Phosphothreonine modification is found at T2. Residues 41–61 (CAYFALGGWFTGTTFVTSWYT) traverse the membrane as a helical segment. H118 contributes to the chlorophyll a binding site. The helical transmembrane segment at 125 to 141 (GFMLRQFELARSVQLRP) threads the bilayer. Positions 130 and 143 each coordinate pheophytin a. Residues 153-166 (VFVSVFLIYPLGQS) traverse the membrane as a helical segment. H198 contributes to the chlorophyll a binding site. A helical transmembrane segment spans residues 208–228 (AALLCAIHGATVENTLFEDGD). Residues H215 and F262 each contribute to the a plastoquinone site. H215 is a Fe cation binding site. Position 269 (H269) interacts with Fe cation. A helical transmembrane segment spans residues 279 to 295 (GLWMSALGVVGLALNLR).

This sequence belongs to the reaction center PufL/M/PsbA/D family. In terms of assembly, PSII is composed of 1 copy each of membrane proteins PsbA, PsbB, PsbC, PsbD, PsbE, PsbF, PsbH, PsbI, PsbJ, PsbK, PsbL, PsbM, PsbT, PsbX, PsbY, PsbZ, Psb30/Ycf12, at least 3 peripheral proteins of the oxygen-evolving complex and a large number of cofactors. It forms dimeric complexes. The cofactor is The D1/D2 heterodimer binds P680, chlorophylls that are the primary electron donor of PSII, and subsequent electron acceptors. It shares a non-heme iron and each subunit binds pheophytin, quinone, additional chlorophylls, carotenoids and lipids. There is also a Cl(-1) ion associated with D1 and D2, which is required for oxygen evolution. The PSII complex binds additional chlorophylls, carotenoids and specific lipids..

It is found in the plastid. Its subcellular location is the chloroplast thylakoid membrane. The catalysed reaction is 2 a plastoquinone + 4 hnu + 2 H2O = 2 a plastoquinol + O2. In terms of biological role, photosystem II (PSII) is a light-driven water:plastoquinone oxidoreductase that uses light energy to abstract electrons from H(2)O, generating O(2) and a proton gradient subsequently used for ATP formation. It consists of a core antenna complex that captures photons, and an electron transfer chain that converts photonic excitation into a charge separation. The D1/D2 (PsbA/PsbD) reaction center heterodimer binds P680, the primary electron donor of PSII as well as several subsequent electron acceptors. D2 is needed for assembly of a stable PSII complex. In Amborella trichopoda, this protein is Photosystem II D2 protein.